Reading from the N-terminus, the 296-residue chain is uncharacterized protein (296 aa).

One can recognise an FAD-binding FR-type domain in the interval 1 to 95; the sequence is MYKIVSKKEL…VGPLGVPSEF (95 aa).

This is an uncharacterized protein from Clostridium beijerinckii (Clostridium MP).